The primary structure comprises 171 residues: ATP synthase subunit delta (171 aa).

Belongs to the ATPase delta chain family. In terms of assembly, F-type ATPases have 2 components, F(1) - the catalytic core - and F(0) - the membrane proton channel. F(1) has five subunits: alpha(3), beta(3), gamma(1), delta(1), epsilon(1). F(0) has three main subunits: a(1), b(2) and c(10-14). The alpha and beta chains form an alternating ring which encloses part of the gamma chain. F(1) is attached to F(0) by a central stalk formed by the gamma and epsilon chains, while a peripheral stalk is formed by the delta and b chains.

It localises to the cell membrane. F(1)F(0) ATP synthase produces ATP from ADP in the presence of a proton or sodium gradient. F-type ATPases consist of two structural domains, F(1) containing the extramembraneous catalytic core and F(0) containing the membrane proton channel, linked together by a central stalk and a peripheral stalk. During catalysis, ATP synthesis in the catalytic domain of F(1) is coupled via a rotary mechanism of the central stalk subunits to proton translocation. In terms of biological role, this protein is part of the stalk that links CF(0) to CF(1). It either transmits conformational changes from CF(0) to CF(1) or is implicated in proton conduction. The polypeptide is ATP synthase subunit delta (Acholeplasma laidlawii (strain PG-8A)).